The sequence spans 343 residues: Ferredoxin--NADP reductase (343 aa).

Residues C18, D37, Q45, Y50, V90, F125, D290, and T331 each contribute to the FAD site.

Belongs to the ferredoxin--NADP reductase type 2 family. Homodimer. It depends on FAD as a cofactor.

The enzyme catalyses 2 reduced [2Fe-2S]-[ferredoxin] + NADP(+) + H(+) = 2 oxidized [2Fe-2S]-[ferredoxin] + NADPH. The sequence is that of Ferredoxin--NADP reductase from Parvibaculum lavamentivorans (strain DS-1 / DSM 13023 / NCIMB 13966).